Consider the following 358-residue polypeptide: Photosystem II protein D1 (358 aa).

The next 3 membrane-spanning stretches (helical) occupy residues 28-45 (YVGWFGVLMVPTLLAAAI), 117-132 (HFLIGICCWLGRQWEL), and 141-155 (WICVAYSAPLSAAFA). Chlorophyll a is bound at residue histidine 117. Pheophytin a is bound at residue tryptophan 125. The [CaMn4O5] cluster site is built by aspartate 169 and glutamate 188. The chain crosses the membrane as a helical span at residues 196–217 (FHMIGVAGMFGGSLFSAMHGSL). A chlorophyll a-binding site is contributed by histidine 197. Residues histidine 214 and 263 to 264 (SF) each bind a quinone. Residue histidine 214 coordinates Fe cation. Fe cation is bound at residue histidine 271. Residues 273–287 (FLAAWPVICIWITSL) form a helical membrane-spanning segment. Histidine 331, glutamate 332, aspartate 341, and alanine 343 together coordinate [CaMn4O5] cluster. Positions 344–358 (AAESTPVALIAPAIG) are excised as a propeptide.

The protein belongs to the reaction center PufL/M/PsbA/D family. PSII is composed of 1 copy each of membrane proteins PsbA, PsbB, PsbC, PsbD, PsbE, PsbF, PsbH, PsbI, PsbJ, PsbK, PsbL, PsbM, PsbT, PsbX, PsbY, Psb30/Ycf12, peripheral proteins PsbO, CyanoQ (PsbQ), PsbU, PsbV and a large number of cofactors. It forms dimeric complexes. Requires The D1/D2 heterodimer binds P680, chlorophylls that are the primary electron donor of PSII, and subsequent electron acceptors. It shares a non-heme iron and each subunit binds pheophytin, quinone, additional chlorophylls, carotenoids and lipids. D1 provides most of the ligands for the Mn4-Ca-O5 cluster of the oxygen-evolving complex (OEC). There is also a Cl(-1) ion associated with D1 and D2, which is required for oxygen evolution. The PSII complex binds additional chlorophylls, carotenoids and specific lipids. as cofactor. Post-translationally, tyr-160 forms a radical intermediate that is referred to as redox-active TyrZ, YZ or Y-Z. In terms of processing, C-terminally processed by CtpA; processing is essential to allow assembly of the oxygen-evolving complex and thus photosynthetic growth.

The protein localises to the cellular thylakoid membrane. It catalyses the reaction 2 a plastoquinone + 4 hnu + 2 H2O = 2 a plastoquinol + O2. In terms of biological role, photosystem II (PSII) is a light-driven water:plastoquinone oxidoreductase that uses light energy to abstract electrons from H(2)O, generating O(2) and a proton gradient subsequently used for ATP formation. It consists of a core antenna complex that captures photons, and an electron transfer chain that converts photonic excitation into a charge separation. The D1/D2 (PsbA/PsbD) reaction center heterodimer binds P680, the primary electron donor of PSII as well as several subsequent electron acceptors. This Prochlorococcus marinus (strain MIT 9303) protein is Photosystem II protein D1.